Consider the following 379-residue polypeptide: Glutamate 5-kinase (379 aa).

An ATP-binding site is contributed by Lys17. Residues Ser57, Asp144, and Asn156 each coordinate substrate. Residue 176-177 (SD) coordinates ATP. The PUA domain occupies 282 to 359 (SGILMIDQGA…EEIESILGYE (78 aa)).

The protein belongs to the glutamate 5-kinase family.

The protein resides in the cytoplasm. The enzyme catalyses L-glutamate + ATP = L-glutamyl 5-phosphate + ADP. It participates in amino-acid biosynthesis; L-proline biosynthesis; L-glutamate 5-semialdehyde from L-glutamate: step 1/2. Its function is as follows. Catalyzes the transfer of a phosphate group to glutamate to form L-glutamate 5-phosphate. The protein is Glutamate 5-kinase of Bartonella henselae (strain ATCC 49882 / DSM 28221 / CCUG 30454 / Houston 1) (Rochalimaea henselae).